Consider the following 436-residue polypeptide: Cyclic GMP-AMP synthase (436 aa).

Residue Gln-112 to Tyr-117 participates in GTP binding. Positions 131 and 133 each coordinate Mg(2+). Arg-182 provides a ligand contact to ATP. Asp-193 is a binding site for Mg(2+). Ser-259 contacts ATP. Lys-287, Ser-301, and Asp-348 together coordinate GTP. 2 disordered regions span residues Arg-339–Lys-358 and Ala-417–Gly-436. Polar residues predominate over residues Glu-419–Gly-436. Residue Gly-436 forms a Glycyl lysine isopeptide (Gly-Lys) (interchain with K-? in acceptor proteins) linkage.

Belongs to the CD-NTase family. A01 subfamily. In terms of assembly, monomer. Interacts with Cap2 in the presence and absence of phage T2. A Cap2 dimer is bound on either side by a DncV monomer. The cofactor is Mg(2+). In bacteria expressing capV-cdnD-cap2, this protein is conjugated to a number of other proteins (by Cap2 via this protein's C-terminal Gly residue), many of which are involved in metabolism. More conjugated protein is found in the absence of Cap3.

It catalyses the reaction GTP + ATP = 3',3'-cGAMP + 2 diphosphate. Its activity is regulated as follows. Primed for activation by Cap2 which conjugates it to cellular proteins; priming is target protein-specific (green fluorescent protein does not activate the enzyme), but which protein(s) activate is unclear. Enzymatic activity of DncV is inhibited by folate-like molecules, such as 5-methyltetrahydrofolate di-glutamate and 5-methyltetrahydrofolate, suggesting the existence of a signaling pathway that links folate-like metabolism cofactors to the regulation of cyclic dinucleotide second messenger synthesis. Lacks a regulatory loop and is constitutively activated. Its function is as follows. Cyclic nucleotide synthase (second messenger synthase) of a CBASS antivirus system. CBASS (cyclic oligonucleotide-based antiphage signaling system) provides immunity against bacteriophages. The CD-NTase protein (DncV, this protein) synthesizes cyclic nucleotides in response to infection; these serve as specific second messenger signals. The signals activate a diverse range of effectors, leading to bacterial cell death and thus abortive phage infection. A type II-A(GA) CBASS system. Functionally, catalyzes the synthesis of 3',3'-cyclic GMP-AMP (cGAMP), a second messenger in cell signal transduction, from GTP and ATP in response to phage infection. Also able to produce c-di-AMP and c-di-GMP from ATP and GTP, respectively; however, cGAMP is the dominant molecule produced by DncV in vivo, contrary to the 2'3'-cGAMP produced by eukaryotes. Is required for efficient V.cholerae intestinal colonization, and down-regulates the colonization-influencing process of chemotaxis. Is not active with dATP, TTP, UTP or CTP. Its product controls the activity of cGAMP-activated phospholipase CapV, a patatin-like lipase that is a direct cGAMP receptor encoded in the dncV operon. In terms of biological role, protects E.coli against phage infection. When the CBASS operon (capV-dncV-cap2-cap3) is introduced in E.coli MG1655 there is about 100-fold protection against phages P1 and T2. When the operon is introduced in E.coli MG1655 there is a more than 10(3) decrease in the efficiency of T2 plaque formation. Protects 100-fold against phage T5, offers no protection against T7. When the operon is introduced in E.coli MG1655 it protects against phages T2, T4, T5 and T6. Another paper shows the operon confers protection against phages P1, T2, T5 and T6 but not T4 or lambda. The polypeptide is Cyclic GMP-AMP synthase (Vibrio cholerae serotype O1 (strain ATCC 39315 / El Tor Inaba N16961)).